A 606-amino-acid chain; its full sequence is Adenine deaminase (606 aa).

This sequence belongs to the metallo-dependent hydrolases superfamily. Adenine deaminase family. Requires Mn(2+) as cofactor.

It carries out the reaction adenine + H2O + H(+) = hypoxanthine + NH4(+). In Rubrobacter xylanophilus (strain DSM 9941 / JCM 11954 / NBRC 16129 / PRD-1), this protein is Adenine deaminase.